The primary structure comprises 505 residues: Histidine ammonia-lyase (505 aa).

Residues 141 to 143 (ASG) constitute a cross-link (5-imidazolinone (Ala-Gly)). The residue at position 142 (S142) is a 2,3-didehydroalanine (Ser).

The protein belongs to the PAL/histidase family. Post-translationally, contains an active site 4-methylidene-imidazol-5-one (MIO), which is formed autocatalytically by cyclization and dehydration of residues Ala-Ser-Gly.

It localises to the cytoplasm. The catalysed reaction is L-histidine = trans-urocanate + NH4(+). It functions in the pathway amino-acid degradation; L-histidine degradation into L-glutamate; N-formimidoyl-L-glutamate from L-histidine: step 1/3. The protein is Histidine ammonia-lyase of Bacillus cereus (strain ATCC 10987 / NRS 248).